Consider the following 62-residue polypeptide: Potassium channel toxin alpha-KTx 18.3 (62 aa).

The first 26 residues, 1 to 26 (MHFSGVAFILISMVLIGSIFETTVEA), serve as a signal peptide directing secretion. Intrachain disulfides connect Cys34–Cys53, Cys39–Cys58, and Cys43–Cys60.

Belongs to the short scorpion toxin superfamily. Potassium channel inhibitor family. Alpha-KTx 18 subfamily. As to expression, expressed by the venom gland.

It localises to the secreted. Probable voltage-gated potassium channel inhibitor. The protein is Potassium channel toxin alpha-KTx 18.3 of Tityus discrepans (Venezuelan scorpion).